Consider the following 246-residue polypeptide: tRNA (guanine-N(1)-)-methyltransferase (246 aa).

S-adenosyl-L-methionine is bound by residues Gly-117 and 137–142 (IGDYVL).

Belongs to the RNA methyltransferase TrmD family. As to quaternary structure, homodimer.

The protein resides in the cytoplasm. It carries out the reaction guanosine(37) in tRNA + S-adenosyl-L-methionine = N(1)-methylguanosine(37) in tRNA + S-adenosyl-L-homocysteine + H(+). In terms of biological role, specifically methylates guanosine-37 in various tRNAs. This is tRNA (guanine-N(1)-)-methyltransferase from Acinetobacter baumannii (strain ACICU).